Reading from the N-terminus, the 27-residue chain is Caerulein precursor fragment R7 (27 aa).

Expressed by the skin glands.

The protein resides in the secreted. Functionally, antimicrobial peptide. This chain is Caerulein precursor fragment R7, found in Xenopus ruwenzoriensis (Uganda clawed frog).